Reading from the N-terminus, the 281-residue chain is Phosphatidylserine decarboxylase proenzyme (281 aa).

Active-site charge relay system; for autoendoproteolytic cleavage activity residues include Asp90, His143, and Ser248. Residue Ser248 is the Schiff-base intermediate with substrate; via pyruvic acid; for decarboxylase activity of the active site. A Pyruvic acid (Ser); by autocatalysis modification is found at Ser248.

The protein belongs to the phosphatidylserine decarboxylase family. PSD-B subfamily. Prokaryotic type I sub-subfamily. As to quaternary structure, heterodimer of a large membrane-associated beta subunit and a small pyruvoyl-containing alpha subunit. It depends on pyruvate as a cofactor. In terms of processing, is synthesized initially as an inactive proenzyme. Formation of the active enzyme involves a self-maturation process in which the active site pyruvoyl group is generated from an internal serine residue via an autocatalytic post-translational modification. Two non-identical subunits are generated from the proenzyme in this reaction, and the pyruvate is formed at the N-terminus of the alpha chain, which is derived from the carboxyl end of the proenzyme. The autoendoproteolytic cleavage occurs by a canonical serine protease mechanism, in which the side chain hydroxyl group of the serine supplies its oxygen atom to form the C-terminus of the beta chain, while the remainder of the serine residue undergoes an oxidative deamination to produce ammonia and the pyruvoyl prosthetic group on the alpha chain. During this reaction, the Ser that is part of the protease active site of the proenzyme becomes the pyruvoyl prosthetic group, which constitutes an essential element of the active site of the mature decarboxylase.

The protein localises to the cell membrane. It catalyses the reaction a 1,2-diacyl-sn-glycero-3-phospho-L-serine + H(+) = a 1,2-diacyl-sn-glycero-3-phosphoethanolamine + CO2. Its pathway is phospholipid metabolism; phosphatidylethanolamine biosynthesis; phosphatidylethanolamine from CDP-diacylglycerol: step 2/2. Its function is as follows. Catalyzes the formation of phosphatidylethanolamine (PtdEtn) from phosphatidylserine (PtdSer). The chain is Phosphatidylserine decarboxylase proenzyme from Francisella philomiragia subsp. philomiragia (strain ATCC 25017 / CCUG 19701 / FSC 153 / O#319-036).